The primary structure comprises 650 residues: 1-deoxy-D-xylulose-5-phosphate synthase 2 (650 aa).

Residues His-79 and Ala-120–Ser-122 each bind thiamine diphosphate. Asp-151 is a Mg(2+) binding site. Thiamine diphosphate-binding positions include Gly-152–Ser-153, Asn-180, Tyr-289, and Glu-371. Asn-180 provides a ligand contact to Mg(2+).

This sequence belongs to the transketolase family. DXPS subfamily. Homodimer. It depends on Mg(2+) as a cofactor. The cofactor is thiamine diphosphate.

It carries out the reaction D-glyceraldehyde 3-phosphate + pyruvate + H(+) = 1-deoxy-D-xylulose 5-phosphate + CO2. The protein operates within metabolic intermediate biosynthesis; 1-deoxy-D-xylulose 5-phosphate biosynthesis; 1-deoxy-D-xylulose 5-phosphate from D-glyceraldehyde 3-phosphate and pyruvate: step 1/1. Functionally, catalyzes the acyloin condensation reaction between C atoms 2 and 3 of pyruvate and glyceraldehyde 3-phosphate to yield 1-deoxy-D-xylulose-5-phosphate (DXP). The protein is 1-deoxy-D-xylulose-5-phosphate synthase 2 of Zymomonas mobilis subsp. mobilis (strain ATCC 31821 / ZM4 / CP4).